Reading from the N-terminus, the 943-residue chain is Lactoferrin-binding protein A (943 aa).

A signal peptide spans 1–27 (MNKKHGFPLTLTALAIATAFPAYAAQA). Residues 52-178 (RRSKEATGLG…LGGAVAFRTK (127 aa)) enclose the TBDR plug domain. One can recognise a TBDR beta-barrel domain in the interval 189-943 (SWGIQAKTAY…NFSLALEMKF (755 aa)). A TonB C-terminal box motif is present at residues 926–943 (GRYAAPGRNFSLALEMKF).

This sequence belongs to the TonB-dependent receptor family.

It localises to the cell outer membrane. In terms of biological role, unknown. May be an iron-siderophore receptor. This chain is Lactoferrin-binding protein A (lbpA), found in Neisseria meningitidis serogroup B (strain ATCC BAA-335 / MC58).